A 438-amino-acid chain; its full sequence is MTAKLEKIENSEAYIEIEVSAEQVEEGLQYAYRKVIKQVAIPGFRKGKAPRELLELQFGKEVLFQDALEYIVPEAYDKALEELNIKPIAQPEFDINDPESGQPFKFNARVPVKPEVKLGEIEGIEVEIPDFQVKEEDVIQKFEDMRQQYAQVVEKIEEPAAMGDKLNIDFEGFIDGEAFAGGKGEDYSLELGSNTFIPGFEEQLVGLKAGESKDVLVTFPESYHAEDLAGKDAVFQVSVKRIETTEARELNDEFAQEVSQFNTIDELRQDIRKNLEEMAESRRKESIKTELMEKALEKCDIPVPDAVINMQVERMLQDFEQRMAYQGLTLEQYFQFTNSNREDFSQKIWPEAEKSVKGDFMLEKLAEEKGMEVSEEELNEHIMKLANNFGMEVDKIKEELGDAIENIRTGLKIDKAIDFLIDKAVVKEVAEITAAAAE.

The 86-residue stretch at 163–248 folds into the PPIase FKBP-type domain; that stretch reads GDKLNIDFEG…VKRIETTEAR (86 aa).

The protein belongs to the FKBP-type PPIase family. Tig subfamily.

The protein resides in the cytoplasm. It catalyses the reaction [protein]-peptidylproline (omega=180) = [protein]-peptidylproline (omega=0). In terms of biological role, involved in protein export. Acts as a chaperone by maintaining the newly synthesized protein in an open conformation. Functions as a peptidyl-prolyl cis-trans isomerase. This chain is Trigger factor, found in Syntrophomonas wolfei subsp. wolfei (strain DSM 2245B / Goettingen).